A 215-amino-acid polypeptide reads, in one-letter code: Pyrrolidone-carboxylate peptidase (215 aa).

Residues Glu78, Cys141, and His165 contribute to the active site.

Belongs to the peptidase C15 family. As to quaternary structure, homotetramer.

It localises to the cytoplasm. The catalysed reaction is Release of an N-terminal pyroglutamyl group from a polypeptide, the second amino acid generally not being Pro.. Its function is as follows. Removes 5-oxoproline from various penultimate amino acid residues except L-proline. This chain is Pyrrolidone-carboxylate peptidase (pcp), found in Streptococcus pyogenes serotype M1.